The sequence spans 245 residues: uncharacterized protein (245 aa).

A signal peptide spans methionine 1–alanine 20.

The protein to E.coli YmcB.

This is an uncharacterized protein from Escherichia coli (strain K12).